A 412-amino-acid chain; its full sequence is rRNA methyltransferase 1, mitochondrial (412 aa).

The N-terminal 20 residues, 1–20 (MTSLTNAVFKRYLAVTPSAH), are a transit peptide targeting the mitochondrion.

This sequence belongs to the class IV-like SAM-binding methyltransferase superfamily. RNA methyltransferase TrmH family.

It localises to the mitochondrion. It catalyses the reaction guanosine(2270) in 21S rRNA + S-adenosyl-L-methionine = 2'-O-methylguanosine(2270) in 21S rRNA + S-adenosyl-L-homocysteine + H(+). In terms of biological role, S-adenosyl-L-methionine-dependent 2'-O-ribose methyltransferase that catalyzes the formation of 2'-O-methylguanosine at position 2270 (Gm2270) in the 21S mitochondrial large subunit ribosomal RNA (mtLSU rRNA), a universally conserved modification in the peptidyl transferase domain of the mtLSU rRNA. This modification seems to be important for the normal accumulation of the mitochondrial large ribosomal subunit. This is rRNA methyltransferase 1, mitochondrial from Saccharomyces cerevisiae (strain ATCC 204508 / S288c) (Baker's yeast).